Here is a 101-residue protein sequence, read N- to C-terminus: Small ribosomal subunit protein uS14 (101 aa).

The tract at residues 51-72 (LPRDSSPSRQRNPCRQTGRPHG) is disordered. Residues 52–65 (PRDSSPSRQRNPCR) show a composition bias toward polar residues.

This sequence belongs to the universal ribosomal protein uS14 family. Part of the 30S ribosomal subunit. Contacts proteins S3 and S10.

In terms of biological role, binds 16S rRNA, required for the assembly of 30S particles and may also be responsible for determining the conformation of the 16S rRNA at the A site. The protein is Small ribosomal subunit protein uS14 of Buchnera aphidicola subsp. Acyrthosiphon kondoi (Acyrthosiphon kondoi symbiotic bacterium).